Here is a 435-residue protein sequence, read N- to C-terminus: Glucan 1,3-beta-glucosidase (435 aa).

Positions 1–30 are cleaved as a signal peptide; sequence MLFPVLHLPKAMKFSSFSLIASSLLSLVAA. The Proton donor role is filled by Glu222. 2 disulfide bridges follow: Cys306–Cys432 and Cys331–Cys357. The Nucleophile role is filled by Glu323.

The protein belongs to the glycosyl hydrolase 5 (cellulase A) family.

Its subcellular location is the secreted. The catalysed reaction is Successive hydrolysis of beta-D-glucose units from the non-reducing ends of (1-&gt;3)-beta-D-glucans, releasing alpha-glucose.. In terms of biological role, beta-glucanases participate in the metabolism of beta-glucan, the main structural component of the cell wall. It could also function biosynthetically as a transglycosylase. The sequence is that of Glucan 1,3-beta-glucosidase from Pichia angusta (Yeast).